A 403-amino-acid chain; its full sequence is Argininosuccinate synthase (403 aa).

Residues 10 to 18 and Ala-37 each bind ATP; that span reads AYSGGLDTS. L-citrulline-binding residues include Tyr-88 and Ser-93. Gly-118 contributes to the ATP binding site. Positions 120, 124, and 125 each coordinate L-aspartate. Residue Asn-124 participates in L-citrulline binding. Residues Arg-128, Ser-178, Ser-187, Glu-263, and Tyr-275 each contribute to the L-citrulline site.

The protein belongs to the argininosuccinate synthase family. Type 1 subfamily. As to quaternary structure, homotetramer.

It localises to the cytoplasm. It catalyses the reaction L-citrulline + L-aspartate + ATP = 2-(N(omega)-L-arginino)succinate + AMP + diphosphate + H(+). It functions in the pathway amino-acid biosynthesis; L-arginine biosynthesis; L-arginine from L-ornithine and carbamoyl phosphate: step 2/3. The polypeptide is Argininosuccinate synthase (Marinobacter nauticus (strain ATCC 700491 / DSM 11845 / VT8) (Marinobacter aquaeolei)).